A 508-amino-acid polypeptide reads, in one-letter code: Photosystem II CP47 reaction center protein (508 aa).

6 consecutive transmembrane segments (helical) span residues 21–36 (AVHL…WAGS), 101–115 (IILS…IWHW), 140–156 (GIHL…FGAF), 203–218 (IAAG…FHLS), 237–252 (VLSS…AFVV), and 457–472 (IFAL…HGAR).

It belongs to the PsbB/PsbC family. PsbB subfamily. PSII is composed of 1 copy each of membrane proteins PsbA, PsbB, PsbC, PsbD, PsbE, PsbF, PsbH, PsbI, PsbJ, PsbK, PsbL, PsbM, PsbT, PsbY, PsbZ, Psb30/Ycf12, at least 3 peripheral proteins of the oxygen-evolving complex and a large number of cofactors. It forms dimeric complexes. Binds multiple chlorophylls. PSII binds additional chlorophylls, carotenoids and specific lipids. serves as cofactor.

Its subcellular location is the plastid. It localises to the chloroplast thylakoid membrane. Its function is as follows. One of the components of the core complex of photosystem II (PSII). It binds chlorophyll and helps catalyze the primary light-induced photochemical processes of PSII. PSII is a light-driven water:plastoquinone oxidoreductase, using light energy to abstract electrons from H(2)O, generating O(2) and a proton gradient subsequently used for ATP formation. In Bigelowiella natans (Pedinomonas minutissima), this protein is Photosystem II CP47 reaction center protein.